Reading from the N-terminus, the 139-residue chain is Putative pre-16S rRNA nuclease (139 aa).

This sequence belongs to the YqgF nuclease family.

It is found in the cytoplasm. Could be a nuclease involved in processing of the 5'-end of pre-16S rRNA. This Legionella pneumophila subsp. pneumophila (strain Philadelphia 1 / ATCC 33152 / DSM 7513) protein is Putative pre-16S rRNA nuclease.